A 1028-amino-acid chain; its full sequence is MRTGGYTIQQTLTTEAASVLKHSLTLARRRGHAQVTPLHVAATLLSSRTSLLRRACIKSHPGFSTNYQFAPSRLQHHHHHNQNHPLQCRALELCFNVALNRLPTVPGPMFHGQPSLANALVAALKRAQAHQRRGCIEQQQQTQTHPQTQQTQLLAVKVELEQLVISILDDPSVSRVMREAGFNSTAVKSCVEDCSVSSVFYGGSAVGVFSSPNSPDQQQQHHNSINRLHHYQNPKDFNFINPNFPLWQTHFLNQSPDQNPLLLSSSASHHHQQQRLREIDLKLVVDVLMRKKTKKKNPVIVGDSISFTEGFVSELMAKLERGEIDQTGELKQTHFVKFHFSPMASKFMRREDVELNIKELRKKVLSLTTSGKNAIIFTGDLKWTVKEITNNNSGGINEISSSYSPLDHLVEEIGKLITECNDDGDDDDCKTRKVWVMGTASFQTYMRCQMRQPSLETLWALHPVSVPSSANLGLSLHATSGHEARNMSTVNATKSLSGYDKAEEEETISHVLSCCPECVTSFDREAKSLKANQDKLLPSWLQSHDADSSSQKDELMGLKRKWNRFCETLHNQTGQLSMMGNYPYGLPYGSSHESSKSTSLIDSLGLKPNQRATNSIAKFRRQNSCTIEFDLGGNEHEKGESINEAEDDKGNETVTLDLGRSLFRSDSVTDTRLKLSALVKALEESIPRQTVTMRLIAESLMDCVSKKKDSWIIIEGRDTTAKRRVARTVSESVFGSFESLVHIDLKKKGNESKASPATLLAYELKNPEKVVFLIEDIDLADSRFLKLLADRFEDKRRIKTGIDHRQAIFILTKEDSRNVRNRDSVLQIGLEITAQSPGKKRKPESDLSIENGFWMKKEVCSRQSSFNSSYLDLNIKAEDEEVEGEISPISSDLTGEEETEFSSSSNFLNRIQNRFVLNRSCEPGIEKGMITAAFREIFPEREEGGGVRFSVEDKLVEELYGIQNGAFERWLKEVFQTGLLTVKKGGKKDTGVIRMVFGGIVDNKGYGGGVGGYMATFLPNKVQVSKFE.

The 192-residue stretch at 8–199 (IQQTLTTEAA…CVEDCSVSSV (192 aa)) folds into the Clp R domain. 2 repeat regions span residues 12 to 102 (LTTE…LNRL) and 116 to 199 (LANA…VSSV). Positions 871–875 (LDLNI) match the EAR motif.

It belongs to the ClpA/ClpB family. Interacts probably with TPL/TPR in an EAR-motif dependent manner. As to expression, detected in roots, seedlings and axillary branches.

May function in a transcriptional corepressor complex. The polypeptide is Protein SMAX1-LIKE 5 (Arabidopsis thaliana (Mouse-ear cress)).